A 64-amino-acid chain; its full sequence is MPKMKTNKGAAKRFQKTAGGIKFKHAGKRHILTKRTTKNKRQLRPNSILPKCEVAQVLRMMPYA.

This sequence belongs to the bacterial ribosomal protein bL35 family.

This chain is Large ribosomal subunit protein bL35, found in Vibrio atlanticus (strain LGP32) (Vibrio splendidus (strain Mel32)).